The chain runs to 257 residues: Thiazole synthase (257 aa).

Catalysis depends on K97, which acts as the Schiff-base intermediate with DXP. 1-deoxy-D-xylulose 5-phosphate is bound by residues G158, 184 to 185 (AG), and 206 to 207 (NT).

The protein belongs to the ThiG family. In terms of assembly, homotetramer. Forms heterodimers with either ThiH or ThiS.

It is found in the cytoplasm. The enzyme catalyses [ThiS sulfur-carrier protein]-C-terminal-Gly-aminoethanethioate + 2-iminoacetate + 1-deoxy-D-xylulose 5-phosphate = [ThiS sulfur-carrier protein]-C-terminal Gly-Gly + 2-[(2R,5Z)-2-carboxy-4-methylthiazol-5(2H)-ylidene]ethyl phosphate + 2 H2O + H(+). The protein operates within cofactor biosynthesis; thiamine diphosphate biosynthesis. Functionally, catalyzes the rearrangement of 1-deoxy-D-xylulose 5-phosphate (DXP) to produce the thiazole phosphate moiety of thiamine. Sulfur is provided by the thiocarboxylate moiety of the carrier protein ThiS. In vitro, sulfur can be provided by H(2)S. In Desulforamulus reducens (strain ATCC BAA-1160 / DSM 100696 / MI-1) (Desulfotomaculum reducens), this protein is Thiazole synthase.